The chain runs to 876 residues: MGPLGREAWAQRLGAFRASPSAFLAGAEGEDLGRDLLSDLRSEKLSEQTKVSLLTLSLEYSDKLWPDAPAAEAAATSLLDTLVLLPTRPSALRRLLLLAATTALVSGDALGPTSGASCRLLPLLLGLASGRDLGRSFGTPSEQRHLQATACECLGELERCKPGLLAGALGMLRSLPGQTGPIQPVSLLLALVLHDTLVVQSRSGAGLQGLLVAEDFSTGSCPWDWTLAEEWDAHLKPQGPSWPTAGEEERGFPVLEPSPEDARELKAAVAQLLDTSYLLTPVAQAQLLWLLGWALRGLRGQPPVLFKPQLVRLLGTAQLTLLHSVLSLKAAFGEALFTAQDEALLLRRLTLGAQHPALPSPTHLFYLHCILSFPENCPLGPEGEEAAPLLLGPQLCRGLMPSLLHDPTVLLARLHLLCLLCADDEEEEKDQTQGPQWFLQEVLAGLQQRAALDGGPRALATLCFQASYLVTNCLTRHSTVQTFLIRGLAQLYRARPSLAPHFVDLLDQVSPELREPLREVLLQEAVARPGESEALCWHLQMLAKVAEGATQSTTLSFLQAAAVHCTDWGLHQALLRVCRALLRTGGGDGLANLLQELARQLENADGRDHARLYYVLLSHLSSSKLGMALGPSLAAPALASSLMAENQGFSSALMVQETSAPIQLSVGPQQAKGPLPVLCLQVQALDAPVYSLELRFRVEGQLYEPLEAVHIPCLRPGQPAHPLYLLLQPRCPAPARLHVRALYSTSAGLTCHARLPPLSVNFADLFLPFPRLPKGSELRFFDELWNSCLPKGVESRVWCPLGQQGLEALVSQYLEPFVVLAQPPTTYLIAIRLPPASMLLLRLEKAQVDGVPVALRTDDWAVLPLVGDYLRGLAAH.

As to quaternary structure, probably part of the adaptor protein complex 5 (AP-5), a tetramer composed of AP5B1, AP5M1, AP5S1 and AP5Z1. Interacts with ZFYVE26 and SPG11.

Its function is as follows. As part of AP-5, a probable fifth adaptor protein complex it may be involved in endosomal transport. In Mus musculus (Mouse), this protein is AP-5 complex subunit beta-1 (Ap5b1).